The following is a 260-amino-acid chain: Global transcriptional regulator CodY (260 aa).

Positions 1–159 (MPNLLEKTRK…SSTVVGIQLL (159 aa)) are GAF domain. The segment at residues 207-226 (ASVIADRIGITRSVIVNALR) is a DNA-binding region (H-T-H motif).

This sequence belongs to the CodY family.

It localises to the cytoplasm. Functionally, DNA-binding global transcriptional regulator which is involved in the adaptive response to starvation and acts by directly or indirectly controlling the expression of numerous genes in response to nutrient availability. During rapid exponential growth, CodY is highly active and represses genes whose products allow adaptation to nutrient depletion. In Streptococcus equi subsp. equi (strain 4047), this protein is Global transcriptional regulator CodY.